Here is a 425-residue protein sequence, read N- to C-terminus: Glutamate-1-semialdehyde 2,1-aminomutase (425 aa).

Lysine 265 is modified (N6-(pyridoxal phosphate)lysine).

Belongs to the class-III pyridoxal-phosphate-dependent aminotransferase family. HemL subfamily. Homodimer. It depends on pyridoxal 5'-phosphate as a cofactor.

Its subcellular location is the cytoplasm. The catalysed reaction is (S)-4-amino-5-oxopentanoate = 5-aminolevulinate. It participates in porphyrin-containing compound metabolism; protoporphyrin-IX biosynthesis; 5-aminolevulinate from L-glutamyl-tRNA(Glu): step 2/2. The chain is Glutamate-1-semialdehyde 2,1-aminomutase from Thiobacillus denitrificans (strain ATCC 25259 / T1).